Reading from the N-terminus, the 631-residue chain is Double-strand-break repair protein rad21 homolog (631 aa).

Phosphoserine is present on Ser-46. Residue Lys-48 forms a Glycyl lysine isopeptide (Lys-Gly) (interchain with G-Cter in SUMO2) linkage. Residues 126 to 282 (DIDVAQQFSL…GGPDSPDSVD (157 aa)) are required for interaction with SMARCA5. Ser-153 carries the phosphoserine modification. An interaction with NIPBL region spans residues 154–171 (ILQENDFGDFGMDDREIM). Ser-175 is subject to Phosphoserine. A Glycyl lysine isopeptide (Lys-Gly) (interchain with G-Cter in SUMO2) cross-link involves residue Lys-216. Ser-249 is modified (phosphoserine). The interval 258-285 (QPAHDDMDEDDNVSMGGPDSPDSVDPVE) is disordered. The span at 271–285 (SMGGPDSPDSVDPVE) shows a compositional bias: low complexity. The interaction with WAPL and PDS5B stretch occupies residues 287–403 (MPTMTDQTTL…TPLVPEDLRK (117 aa)). The interaction with STAG1 stretch occupies residues 362–403 (MWKETGGVEKLFSLPAQPLWNNRLLKLFTRCLTPLVPEDLRK). At Thr-394 the chain carries Phosphothreonine. Lys-418 participates in a covalent cross-link: Glycyl lysine isopeptide (Lys-Gly) (interchain with G-Cter in SUMO2). Over residues 423-440 (PEVPREDQQQQHQQRDVI) the composition is skewed to basic and acidic residues. 2 disordered regions span residues 423-489 (PEVP…EPVM) and 517-558 (PELE…RWNK). At Ser-454 the chain carries Phosphoserine. The span at 522-532 (LPEKEKEKEKE) shows a compositional bias: basic and acidic residues. Residues 533-551 (KEDDEEEEDEDASGGDQDQ) are compositionally biased toward acidic residues. Ser-545 carries the phosphoserine modification. Position 623 is a phosphothreonine (Thr-623).

Belongs to the rad21 family. Component of the cohesin complex, which consists of an SMC1A/B and SMC3 heterodimer core and 2 non-Smc subunits RAD21 and STAG1/SA1, STAG2/SA2 or STAG3/SA3. Interacts (via C-terminus) with SMC1A and (via N-terminus) with SMC3; these interactions are direct. The cohesin complex interacts with NUMA1. The cohesin complex also interacts with CDCA5, PDS5A and PDS5B; this interaction might regulate the ability of the cohesin complex to mediate sister chromatid cohesion. The interaction with PDS5B is direct and is stimulated by STAG1/SA1. The cohesin complex interacts with the cohesin loading complex subunits NIPBL/Scc2 (via HEAT repeats) and MAU2/Scc4. NIPBL directly contacts all members of the complex, RAD21, SMC1A/B, SMC3 and STAG1. The cohesin complex interacts with DDX11/ChIR1. Directly interacts with WAPL; this interaction is stimulated by STAG1/SA1. Interacts with the ISWI chromatin remodeling complex component SMARCA5/SNF2h; the interaction is direct. Interacts with the NuRD complex component CHD4; the interaction is direct. Cleaved by separase/ESPL1 at the onset of anaphase; this cleavage is required for sister chromatid separation and cytokinesis. Cleaved by caspase-3/CASP3 or caspase-7/CASP7 at the beginning of apoptosis. In terms of processing, phosphorylated; becomes hyperphosphorylated in M phase of cell cycle. The large dissociation of cohesin from chromosome arms during prophase may be partly due to its phosphorylation by PLK1. Expressed in the gut (at protein level).

Its subcellular location is the nucleus. It is found in the nucleus matrix. It localises to the chromosome. The protein resides in the centromere. The protein localises to the cytoplasm. Its subcellular location is the cytoskeleton. It is found in the spindle pole. It localises to the cytosol. In terms of biological role, as a member of the cohesin complex, involved in sister chromatid cohesion from the time of DNA replication in S phase to their segregation in mitosis, a function that is essential for proper chromosome segregation, post-replicative DNA repair, and the prevention of inappropriate recombination between repetitive regions. The cohesin complex may also play a role in spindle pole assembly during mitosis. In interphase, cohesins may function in the control of gene expression by binding to numerous sites within the genome. May control RUNX1 gene expression. Binds to and represses APOB gene promoter. May play a role in embryonic gut development, possibly through the regulation of enteric neuron development. May promote apoptosis. This is Double-strand-break repair protein rad21 homolog (RAD21) from Homo sapiens (Human).